A 146-amino-acid chain; its full sequence is Transcriptional regulator MraZ (146 aa).

2 SpoVT-AbrB domains span residues 5–47 (EYYH…TITD) and 76–119 (SVQV…AKER).

It belongs to the MraZ family. In terms of assembly, forms oligomers.

It localises to the cytoplasm. The protein resides in the nucleoid. The polypeptide is Transcriptional regulator MraZ (Dictyoglomus turgidum (strain DSM 6724 / Z-1310)).